Reading from the N-terminus, the 443-residue chain is Putative transporter AmpG 1 (443 aa).

13 helical membrane-spanning segments follow: residues Ser-5 to Gly-25, Ile-42 to Phe-62, Leu-78 to Leu-98, Leu-104 to Ile-124, Gly-143 to Leu-163, Ala-171 to Ala-191, Phe-230 to Phe-250, Asp-254 to Pro-274, Val-299 to Met-319, Ile-324 to Leu-344, Ile-354 to Ile-374, Leu-393 to Val-413, and Phe-415 to Leu-435.

Belongs to the major facilitator superfamily.

The protein localises to the cell inner membrane. The protein is Putative transporter AmpG 1 (ampG1) of Rickettsia prowazekii (strain Madrid E).